The primary structure comprises 99 residues: Nucleoid-associated protein UUR10_0100 (99 aa).

The protein belongs to the YbaB/EbfC family. In terms of assembly, homodimer.

The protein localises to the cytoplasm. The protein resides in the nucleoid. Functionally, binds to DNA and alters its conformation. May be involved in regulation of gene expression, nucleoid organization and DNA protection. The polypeptide is Nucleoid-associated protein UUR10_0100 (Ureaplasma urealyticum serovar 10 (strain ATCC 33699 / Western)).